Consider the following 143-residue polypeptide: Transcriptional regulator MraZ (143 aa).

2 SpoVT-AbrB domains span residues glutamate 5–glutamate 47 and alanine 76–glutamine 119.

This sequence belongs to the MraZ family. Forms oligomers.

The protein resides in the cytoplasm. It is found in the nucleoid. The chain is Transcriptional regulator MraZ from Alkaliphilus metalliredigens (strain QYMF).